Consider the following 103-residue polypeptide: Pro-corazonin (103 aa).

The N-terminal stretch at 1 to 19 is a signal peptide; sequence MSANVTLLLIFVTLASVTA. Q20 carries the pyrrolidone carboxylic acid modification. N30 is subject to Asparagine amide. The propeptide occupies 34–103; sequence DQGHLRPELK…NLNAMMDAFY (70 aa).

In terms of tissue distribution, expressed in corpora cardiaca (CC), corpora allata (CA), antennal lobe (AL) and gnathal ganglion (GNG) (at protein level). Expression in CC and CA detected in all animals, expression in AL and in GNG in some animals.

Its subcellular location is the secreted. Cardioactive peptide. Corazonin is probably involved in the physiological regulation of the heart beat. This is Pro-corazonin from Agrotis ipsilon (Black cutworm moth).